The following is a 214-amino-acid chain: MLCCMRRTKQVEKNEDGDQKIDQDGNKPEDKAHKAATKIQASFRGHIIRKKMKDDKKDDNSEEAVENHKGEAKDEAATTENKTPKTEEPTADGPLEVKKEAISSPAEDKKQEPSSEKPKDTPSEENQASAESESTTKGSTENSPGVDASQAKEESKKADVPEATQDAASEKEQEKAESSQEDVKKDEVEEIKASESAQQDEAVSEEAKPDQENA.

The segment at 1–214 is disordered; that stretch reads MLCCMRRTKQ…EEAKPDQENA (214 aa). 2 S-palmitoyl cysteine lipidation sites follow: Cys-3 and Cys-4. Basic and acidic residues-rich tracts occupy residues 9 to 33, 52 to 88, and 95 to 122; these read KQVE…DKAH, MKDD…KTEE, and LEVK…KDTP. Residues 32–61 enclose the IQ domain; that stretch reads AHKAATKIQASFRGHIIRKKMKDDKKDDNS. Low complexity predominate over residues 124–133; sequence EENQASAESE. 3 stretches are compositionally biased toward basic and acidic residues: residues 150–160, 168–193, and 205–214; these read QAKEESKKADV, ASEK…EIKA, and EEAKPDQENA.

Belongs to the neuromodulin family. In terms of assembly, binds calmodulin with a greater affinity in the absence of Ca(2+) than in its presence. Post-translationally, palmitoylated. Palmitoylation is essential for plasma membrane association.

The protein resides in the cell membrane. It localises to the cell projection. Its subcellular location is the growth cone membrane. It is found in the synapse. The protein localises to the filopodium membrane. Its function is as follows. This protein is associated with nerve growth. It is a major component of the motile 'growth cones' that form the tips of elongating axons. Plays a role in axonal and dendritic filopodia induction. In Xenopus laevis (African clawed frog), this protein is Neuromodulin (gap43).